A 95-amino-acid polypeptide reads, in one-letter code: Mitochondrial import inner membrane translocase subunit Tim9 (95 aa).

The short motif at 35–59 (CFTDCIRDFTTRDVKDSEEKCSLNC) is the Twin CX3C motif element. 2 disulfides stabilise this stretch: cysteine 35–cysteine 59 and cysteine 39–cysteine 55.

It belongs to the small Tim family. In terms of assembly, heterohexamer; composed of 3 copies of Tim9 and 3 copies of Tim10, named soluble 70 kDa complex. The complex associates with the Tim22 component of the TIM22 complex. Interacts with multi-pass transmembrane proteins in transit.

Its subcellular location is the mitochondrion inner membrane. Its function is as follows. Mitochondrial intermembrane chaperone that participates in the import and insertion of multi-pass transmembrane proteins into the mitochondrial inner membrane. May also be required for the transfer of beta-barrel precursors from the TOM complex to the sorting and assembly machinery (SAM complex) of the outer membrane. Acts as a chaperone-like protein that protects the hydrophobic precursors from aggregation and guide them through the mitochondrial intermembrane space. The sequence is that of Mitochondrial import inner membrane translocase subunit Tim9 (Tim9a) from Drosophila melanogaster (Fruit fly).